A 570-amino-acid polypeptide reads, in one-letter code: Chaperonin GroEL 1 (570 aa).

Residues 42 to 45 (TLGP), K63, 99 to 103 (DGTTT), G427, and D507 each bind ATP. The interval 537-570 (EDEDDDDGGGGGGGGMPAGGAGGMGGMGGMGGMM) is disordered. Over residues 545-570 (GGGGGGGMPAGGAGGMGGMGGMGGMM) the composition is skewed to gly residues.

Belongs to the chaperonin (HSP60) family. As to quaternary structure, forms a cylinder of 14 subunits composed of two heptameric rings stacked back-to-back. Interacts with the co-chaperonin GroES.

It is found in the cytoplasm. It carries out the reaction ATP + H2O + a folded polypeptide = ADP + phosphate + an unfolded polypeptide.. Together with its co-chaperonin GroES, plays an essential role in assisting protein folding. The GroEL-GroES system forms a nano-cage that allows encapsulation of the non-native substrate proteins and provides a physical environment optimized to promote and accelerate protein folding. In Salinibacter ruber (strain DSM 13855 / M31), this protein is Chaperonin GroEL 1.